Here is a 610-residue protein sequence, read N- to C-terminus: UvrABC system protein C (610 aa).

The region spanning 16–94 (SQPGVYRMYD…IQRYQPRYNV (79 aa)) is the GIY-YIG domain. Residues 204–239 (SQVIEGLIKRMEEASQALRFEEAARIRDQIHAVRQV) form the UVR domain.

The protein belongs to the UvrC family. Interacts with UvrB in an incision complex.

It is found in the cytoplasm. Functionally, the UvrABC repair system catalyzes the recognition and processing of DNA lesions. UvrC both incises the 5' and 3' sides of the lesion. The N-terminal half is responsible for the 3' incision and the C-terminal half is responsible for the 5' incision. The protein is UvrABC system protein C of Proteus mirabilis (strain HI4320).